The sequence spans 169 residues: tRNA (cytidine(56)-2'-O)-methyltransferase (169 aa).

S-adenosyl-L-methionine contacts are provided by residues L77, G103 to V107, and I121 to E128.

The protein belongs to the aTrm56 family. In terms of assembly, homodimer.

It localises to the cytoplasm. The catalysed reaction is cytidine(56) in tRNA + S-adenosyl-L-methionine = 2'-O-methylcytidine(56) in tRNA + S-adenosyl-L-homocysteine + H(+). Specifically catalyzes the AdoMet-dependent 2'-O-ribose methylation of cytidine at position 56 in tRNAs. This Sulfurisphaera tokodaii (strain DSM 16993 / JCM 10545 / NBRC 100140 / 7) (Sulfolobus tokodaii) protein is tRNA (cytidine(56)-2'-O)-methyltransferase.